Reading from the N-terminus, the 156-residue chain is Small ribosomal subunit protein uS7 (156 aa).

The protein belongs to the universal ribosomal protein uS7 family. As to quaternary structure, part of the 30S ribosomal subunit. Contacts proteins S9 and S11.

In terms of biological role, one of the primary rRNA binding proteins, it binds directly to 16S rRNA where it nucleates assembly of the head domain of the 30S subunit. Is located at the subunit interface close to the decoding center, probably blocks exit of the E-site tRNA. This chain is Small ribosomal subunit protein uS7, found in Klebsiella pneumoniae (strain 342).